The chain runs to 227 residues: Chalcone--flavanone isomerase (227 aa).

Substrate is bound by residues Thr-50, Asn-115, and Ser-192.

This sequence belongs to the chalcone isomerase family. In terms of tissue distribution, fibers.

It catalyses the reaction a chalcone = a flavanone.. Its pathway is secondary metabolite biosynthesis; flavonoid biosynthesis. Catalyzes the intramolecular cyclization of bicyclic chalcones into tricyclic (S)-flavanones. Responsible for the isomerization of 4,2',4',6'-tetrahydroxychalcone (also termed chalcone) into naringenin. The sequence is that of Chalcone--flavanone isomerase (CHI) from Gossypium hirsutum (Upland cotton).